We begin with the raw amino-acid sequence, 117 residues long: Large ribosomal subunit protein uL22 (117 aa).

This sequence belongs to the universal ribosomal protein uL22 family. In terms of assembly, part of the 50S ribosomal subunit.

Functionally, this protein binds specifically to 23S rRNA; its binding is stimulated by other ribosomal proteins, e.g. L4, L17, and L20. It is important during the early stages of 50S assembly. It makes multiple contacts with different domains of the 23S rRNA in the assembled 50S subunit and ribosome. Its function is as follows. The globular domain of the protein is located near the polypeptide exit tunnel on the outside of the subunit, while an extended beta-hairpin is found that lines the wall of the exit tunnel in the center of the 70S ribosome. The sequence is that of Large ribosomal subunit protein uL22 from Latilactobacillus sakei subsp. sakei (strain 23K) (Lactobacillus sakei subsp. sakei).